The primary structure comprises 548 residues: Membrane protein insertase YidC (548 aa).

Residues 6–26 form a helical membrane-spanning segment; it reads NLLVIALLFVSFMIWQAWEQD. A disordered region spans residues 28–54; the sequence is NPQPQTQQTTQTTTTAAGSAADQGVPA. Residues 29 to 42 are compositionally biased toward low complexity; sequence PQPQTQQTTQTTTT. Transmembrane regions (helical) follow at residues 350–370, 424–444, 458–478, and 499–519; these read FVGN…GIMY, FPLI…MGSI, LSAQ…MFFI, and PVIF…YYIV.

It belongs to the OXA1/ALB3/YidC family. Type 1 subfamily. In terms of assembly, interacts with the Sec translocase complex via SecD. Specifically interacts with transmembrane segments of nascent integral membrane proteins during membrane integration.

The protein localises to the cell inner membrane. Functionally, required for the insertion and/or proper folding and/or complex formation of integral membrane proteins into the membrane. Involved in integration of membrane proteins that insert both dependently and independently of the Sec translocase complex, as well as at least some lipoproteins. Aids folding of multispanning membrane proteins. This is Membrane protein insertase YidC from Salmonella arizonae (strain ATCC BAA-731 / CDC346-86 / RSK2980).